The following is a 425-amino-acid chain: 2-methylserine hydroxymethyltransferase (425 aa).

(6S)-5,6,7,8-tetrahydrofolate contacts are provided by residues L126 and 130-132; that span reads GHL. K235 carries the post-translational modification N6-(pyridoxal phosphate)lysine. (6S)-5,6,7,8-tetrahydrofolate is bound at residue E251.

The protein belongs to the SHMT family. In terms of assembly, homodimer. It depends on pyridoxal 5'-phosphate as a cofactor.

It is found in the cytoplasm. The catalysed reaction is (6R)-5,10-methylene-5,6,7,8-tetrahydrofolate + D-alanine + H2O = 2-methylserine + (6S)-5,6,7,8-tetrahydrofolate. Its pathway is one-carbon metabolism; tetrahydrofolate interconversion. Inhibited by hydroxylamine and sodium borohydride. Catalyzes the reversible interconversion of alpha-methyl-L-serine to D-alanine with tetrahydrofolate (THF) serving as the one-carbon carrier. Cannot use alpha-methyl-D-serine, L-serine, D-serine or L-alanine. The protein is 2-methylserine hydroxymethyltransferase of Paracoccus sp.